Here is a 120-residue protein sequence, read N- to C-terminus: Large ribosomal subunit protein uL18 (120 aa).

The protein belongs to the universal ribosomal protein uL18 family. As to quaternary structure, part of the 50S ribosomal subunit; part of the 5S rRNA/L5/L18/L25 subcomplex. Contacts the 5S and 23S rRNAs.

Functionally, this is one of the proteins that bind and probably mediate the attachment of the 5S RNA into the large ribosomal subunit, where it forms part of the central protuberance. The chain is Large ribosomal subunit protein uL18 from Staphylococcus epidermidis (strain ATCC 35984 / DSM 28319 / BCRC 17069 / CCUG 31568 / BM 3577 / RP62A).